Consider the following 29-residue polypeptide: Photosystem I reaction center subunit XII (29 aa).

A helical membrane pass occupies residues 7 to 26 (IFVALILALFSFVLAIRLGT).

This sequence belongs to the PsaM family.

The protein resides in the plastid. The protein localises to the chloroplast thylakoid membrane. The sequence is that of Photosystem I reaction center subunit XII from Guillardia theta (Cryptophyte).